Consider the following 327-residue polypeptide: Nucleotide-binding protein CYB_0992 (327 aa).

Residue 12–19 (GLTGAGKT) participates in ATP binding.

Belongs to the RapZ-like family.

Its function is as follows. Displays ATPase and GTPase activities. This chain is Nucleotide-binding protein CYB_0992, found in Synechococcus sp. (strain JA-2-3B'a(2-13)) (Cyanobacteria bacterium Yellowstone B-Prime).